The following is a 412-amino-acid chain: Argininosuccinate synthase (412 aa).

ATP contacts are provided by residues 16 to 24 (AYSGGLDTS) and Ala-44. 2 residues coordinate L-citrulline: Tyr-96 and Ser-101. Position 126 (Gly-126) interacts with ATP. L-aspartate is bound by residues Thr-128, Asn-132, and Asp-133. L-citrulline is bound at residue Asn-132. Positions 136, 185, 194, 270, and 282 each coordinate L-citrulline.

Belongs to the argininosuccinate synthase family. Type 1 subfamily. Homotetramer.

The protein resides in the cytoplasm. It catalyses the reaction L-citrulline + L-aspartate + ATP = 2-(N(omega)-L-arginino)succinate + AMP + diphosphate + H(+). It functions in the pathway amino-acid biosynthesis; L-arginine biosynthesis; L-arginine from L-ornithine and carbamoyl phosphate: step 2/3. In Shewanella baltica (strain OS195), this protein is Argininosuccinate synthase.